The primary structure comprises 69 residues: DNA gyrase inhibitor YacG (69 aa).

4 residues coordinate Zn(2+): cysteine 9, cysteine 12, cysteine 28, and cysteine 32. The tract at residues 48–69 (PVSPDAEDELFSGDLEAPHRGH) is disordered.

Belongs to the DNA gyrase inhibitor YacG family. In terms of assembly, interacts with GyrB. It depends on Zn(2+) as a cofactor.

Its function is as follows. Inhibits all the catalytic activities of DNA gyrase by preventing its interaction with DNA. Acts by binding directly to the C-terminal domain of GyrB, which probably disrupts DNA binding by the gyrase. The chain is DNA gyrase inhibitor YacG from Pseudomonas syringae pv. syringae (strain B728a).